Reading from the N-terminus, the 430-residue chain is Dynactin subunit 2 (430 aa).

Disordered regions lie at residues 1 to 51 (MSEG…IDRS) and 201 to 228 (SLSSSTTEQNTQQPSNNNTTTNITSSSS). A compositionally biased stretch (polar residues) spans 32-44 (SISNLADESSELV). Coiled-coil stretches lie at residues 241 to 319 (TGEQ…QDET) and 397 to 430 (DDSFKSNLLTIKSNIQQLESRIETLQNRQQQQQQ).

Belongs to the dynactin subunit 2 family. As to quaternary structure, subunit of dynactin, a multiprotein complex associated with dynein.

It is found in the cytoplasm. The protein resides in the cytoskeleton. It localises to the membrane. Functionally, modulates cytoplasmic dynein binding to an organelle, and plays a role in prometaphase chromosome alignment and spindle organization during mitosis. This is Dynactin subunit 2 (dynB) from Dictyostelium discoideum (Social amoeba).